The primary structure comprises 431 residues: Glutamate-1-semialdehyde 2,1-aminomutase (431 aa).

Lys-265 is modified (N6-(pyridoxal phosphate)lysine).

The protein belongs to the class-III pyridoxal-phosphate-dependent aminotransferase family. HemL subfamily. In terms of assembly, homodimer. The cofactor is pyridoxal 5'-phosphate.

It localises to the cytoplasm. It carries out the reaction (S)-4-amino-5-oxopentanoate = 5-aminolevulinate. It functions in the pathway porphyrin-containing compound metabolism; protoporphyrin-IX biosynthesis; 5-aminolevulinate from L-glutamyl-tRNA(Glu): step 2/2. The polypeptide is Glutamate-1-semialdehyde 2,1-aminomutase (Vibrio vulnificus (strain CMCP6)).